We begin with the raw amino-acid sequence, 63 residues long: Toxin Cn11 (63 aa).

Residues 2-63 enclose the LCN-type CS-alpha/beta domain; it reads RDGYPVDEKG…KVWTYETNTC (62 aa). Intrachain disulfides connect C12/C63, C16/C37, C23/C44, and C27/C46.

The protein belongs to the long (4 C-C) scorpion toxin superfamily. Sodium channel inhibitor family. Expressed by the venom gland.

The protein localises to the secreted. Its function is as follows. First blocker of sodium channels (Nav) found in scorpions. Is lethal to crustaceans (Cambarellus montezumae), less toxic to insects (crickets) and non-toxic to mammals (mice) at the doses assayed. The polypeptide is Toxin Cn11 (Centruroides noxius (Mexican scorpion)).